Here is a 287-residue protein sequence, read N- to C-terminus: Putative sugar uptake protein EF_0928 (287 aa).

10 helical membrane-spanning segments follow: residues 5 to 27, 32 to 49, 53 to 71, 84 to 106, 116 to 134, 155 to 177, 182 to 200, 207 to 229, 234 to 256, and 265 to 284; these read IALVPMIAWGSIGLVSGKIGGSA, LGMTIGALLFSIVVFFVI, LTTATLIVGFISGLFWSLG, VSVGLPISTGMQLVVNTVAGAVF, FVVGFIALAFLVFGVYLTA, IRALIFSTVGYGVYTIIINATGL, IILPQSIGMLVGASFFAFK, FVWMNMTTGLLWGLGNICMLLTM, LAISFSLSQMGIIISTLGGIFLL, and MFYVIFGCIFVILGGILLGY.

This sequence belongs to the GRP transporter (TC 2.A.7.5) family.

It localises to the cell membrane. This chain is Putative sugar uptake protein EF_0928, found in Enterococcus faecalis (strain ATCC 700802 / V583).